We begin with the raw amino-acid sequence, 682 residues long: Protein SPT2 homolog (682 aa).

The tract at residues 1–569 is important for interaction with DNA; it reads MDFREILLIA…PLLSGYRSAQ (569 aa). Residue Lys-37 forms a Glycyl lysine isopeptide (Lys-Gly) (interchain with G-Cter in SUMO2) linkage. The stretch at 46 to 82 forms a coiled coil; it reads AFLRRKEEELRQKALEEKKRKEELVKKRIELKHDKKA. The segment at 80–170 is disordered; sequence KKARAMAKRT…SAPSPMNFTD (91 aa). Basic and acidic residues predominate over residues 101-111; the sequence is VEEKTKKKQLV. Over residues 121–131 the composition is skewed to acidic residues; that stretch reads QEYDVEEEDFI. A compositionally biased stretch (low complexity) spans 156 to 165; it reads KAPLKSAPSP. Lys-186 participates in a covalent cross-link: Glycyl lysine isopeptide (Lys-Gly) (interchain with G-Cter in SUMO2). Basic and acidic residues predominate over residues 187–208; it reads VVKKAEDRPLTAEELREREFLE. Disordered stretches follow at residues 187-533 and 549-595; these read VVKK…TKPR and RSSN…DEYD. 5 stretches are compositionally biased toward polar residues: residues 267-280, 317-334, 371-393, 400-409, and 419-432; these read STASEKQAALSSPK, STCSPSVPKTPASGTQKS, PGSNSGSAPGQPNPGTARPTLSS, QNGSSSSGPE, and ASNSHLSGRTLNGT. Ser-277 carries the phosphoserine modification. 2 stretches are compositionally biased toward low complexity: residues 435-460 and 490-504; these read PGRPASSSSGPGRPISGSAGSGRPVG and SGPGRSISGSIPAGR. The segment at 570-682 is important for interaction with histones; sequence GPQRLPFPTG…RRKAKKLKRH (113 aa). Lys-581 carries the N6-acetyllysine modification. Over residues 586–595 the composition is skewed to acidic residues; it reads YEEDDDDEYD. Ser-596 carries the phosphoserine modification. Basic and acidic residues-rich tracts occupy residues 641-652 and 663-672; these read SWKEQQKEEAKS and EMRREEEELK. Positions 641–682 are disordered; that stretch reads SWKEQQKEEAKSLRLGMQEDLEEMRREEEELKRRKAKKLKRH. Residues 642-682 adopt a coiled-coil conformation; that stretch reads WKEQQKEEAKSLRLGMQEDLEEMRREEEELKRRKAKKLKRH. The span at 673-682 shows a compositional bias: basic residues; sequence RRKAKKLKRH.

It belongs to the SPT2 family. In terms of assembly, interacts with histones. Interacts with a heterotetrameric complex formed by histone H3 and H4, especially when the histone tetramer is not bound to DNA. Interacts with histone H3.3.

The protein localises to the nucleus. The protein resides in the nucleolus. Functionally, histone chaperone that stabilizes pre-existing histone tetramers and regulates replication-independent histone exchange on chromatin. Required for normal chromatin refolding in the coding region of transcribed genes, and for the suppression of spurious transcription. Binds DNA and histones and promotes nucleosome assembly (in vitro). Facilitates formation of tetrameric histone complexes containing histone H3 and H4. Modulates RNA polymerase 1-mediated transcription. Binds DNA, with a preference for branched DNA species, such as Y-form DNA and Holliday junction DNA. The protein is Protein SPT2 homolog (Spty2d1) of Mus musculus (Mouse).